Here is an 804-residue protein sequence, read N- to C-terminus: DNA gyrase subunit B (804 aa).

Residues 431–546 form the Toprim domain; sequence CEMYIVEGDS…NGCVYIAQPP (116 aa). 3 residues coordinate Mg(2+): glutamate 437, aspartate 511, and aspartate 513.

Belongs to the type II topoisomerase GyrB family. Heterotetramer, composed of two GyrA and two GyrB chains. In the heterotetramer, GyrA contains the active site tyrosine that forms a transient covalent intermediate with DNA, while GyrB binds cofactors and catalyzes ATP hydrolysis. It depends on Mg(2+) as a cofactor. Mn(2+) serves as cofactor. Requires Ca(2+) as cofactor.

It localises to the cytoplasm. It catalyses the reaction ATP-dependent breakage, passage and rejoining of double-stranded DNA.. Functionally, a type II topoisomerase that negatively supercoils closed circular double-stranded (ds) DNA in an ATP-dependent manner to modulate DNA topology and maintain chromosomes in an underwound state. Negative supercoiling favors strand separation, and DNA replication, transcription, recombination and repair, all of which involve strand separation. Also able to catalyze the interconversion of other topological isomers of dsDNA rings, including catenanes and knotted rings. Type II topoisomerases break and join 2 DNA strands simultaneously in an ATP-dependent manner. The sequence is that of DNA gyrase subunit B from Chlamydia muridarum (strain MoPn / Nigg).